Reading from the N-terminus, the 259-residue chain is Phosphatidylserine decarboxylase proenzyme (259 aa).

Residues Asp-86, His-142, and Ser-226 each act as charge relay system; for autoendoproteolytic cleavage activity in the active site. Catalysis depends on Ser-226, which acts as the Schiff-base intermediate with substrate; via pyruvic acid; for decarboxylase activity. Ser-226 bears the Pyruvic acid (Ser); by autocatalysis mark.

Belongs to the phosphatidylserine decarboxylase family. PSD-B subfamily. Prokaryotic type I sub-subfamily. Heterodimer of a large membrane-associated beta subunit and a small pyruvoyl-containing alpha subunit. The cofactor is pyruvate. In terms of processing, is synthesized initially as an inactive proenzyme. Formation of the active enzyme involves a self-maturation process in which the active site pyruvoyl group is generated from an internal serine residue via an autocatalytic post-translational modification. Two non-identical subunits are generated from the proenzyme in this reaction, and the pyruvate is formed at the N-terminus of the alpha chain, which is derived from the carboxyl end of the proenzyme. The autoendoproteolytic cleavage occurs by a canonical serine protease mechanism, in which the side chain hydroxyl group of the serine supplies its oxygen atom to form the C-terminus of the beta chain, while the remainder of the serine residue undergoes an oxidative deamination to produce ammonia and the pyruvoyl prosthetic group on the alpha chain. During this reaction, the Ser that is part of the protease active site of the proenzyme becomes the pyruvoyl prosthetic group, which constitutes an essential element of the active site of the mature decarboxylase.

The protein localises to the cell membrane. It carries out the reaction a 1,2-diacyl-sn-glycero-3-phospho-L-serine + H(+) = a 1,2-diacyl-sn-glycero-3-phosphoethanolamine + CO2. The protein operates within phospholipid metabolism; phosphatidylethanolamine biosynthesis; phosphatidylethanolamine from CDP-diacylglycerol: step 2/2. Functionally, catalyzes the formation of phosphatidylethanolamine (PtdEtn) from phosphatidylserine (PtdSer). This chain is Phosphatidylserine decarboxylase proenzyme, found in Geobacillus sp. (strain WCH70).